The chain runs to 128 residues: Large ribosomal subunit protein bL12 (128 aa).

The protein belongs to the bacterial ribosomal protein bL12 family. In terms of assembly, homodimer. Part of the ribosomal stalk of the 50S ribosomal subunit. Forms a multimeric L10(L12)X complex, where L10 forms an elongated spine to which 2 to 4 L12 dimers bind in a sequential fashion. Binds GTP-bound translation factors.

In terms of biological role, forms part of the ribosomal stalk which helps the ribosome interact with GTP-bound translation factors. Is thus essential for accurate translation. The polypeptide is Large ribosomal subunit protein bL12 (Synechococcus sp. (strain CC9311)).